The sequence spans 431 residues: 5-methylthioadenosine/S-adenosylhomocysteine deaminase (431 aa).

Positions 64 and 66 each coordinate Zn(2+). Substrate is bound by residues Glu93, Arg145, and His183. His210 lines the Zn(2+) pocket. The substrate site is built by Glu213 and Asp299. Asp299 contributes to the Zn(2+) binding site.

The protein belongs to the metallo-dependent hydrolases superfamily. MTA/SAH deaminase family. Requires Zn(2+) as cofactor.

The enzyme catalyses S-adenosyl-L-homocysteine + H2O + H(+) = S-inosyl-L-homocysteine + NH4(+). It catalyses the reaction S-methyl-5'-thioadenosine + H2O + H(+) = S-methyl-5'-thioinosine + NH4(+). Functionally, catalyzes the deamination of 5-methylthioadenosine and S-adenosyl-L-homocysteine into 5-methylthioinosine and S-inosyl-L-homocysteine, respectively. Is also able to deaminate adenosine. The polypeptide is 5-methylthioadenosine/S-adenosylhomocysteine deaminase (Syntrophomonas wolfei subsp. wolfei (strain DSM 2245B / Goettingen)).